The primary structure comprises 162 residues: Small ribosomal subunit protein uS19 (162 aa).

Residues 1-27 show a composition bias toward basic residues; sequence MAKQKKFSGKGSARSKRKQNRKQVGPR. The disordered stretch occupies residues 1–29; sequence MAKQKKFSGKGSARSKRKQNRKQVGPRRR.

It belongs to the universal ribosomal protein uS19 family.

Its function is as follows. Protein S19 forms a complex with S13 that binds strongly to the 16S ribosomal RNA. In Methanococcus aeolicus (strain ATCC BAA-1280 / DSM 17508 / OCM 812 / Nankai-3), this protein is Small ribosomal subunit protein uS19.